A 341-amino-acid chain; its full sequence is Glycerol-3-phosphate dehydrogenase [NAD(P)+] (341 aa).

The NADPH site is built by S12, W13, R33, and K107. The sn-glycerol 3-phosphate site is built by K107, G134, and T136. A138 lines the NADPH pocket. Residues K189, D242, S252, R253, and N254 each contribute to the sn-glycerol 3-phosphate site. The active-site Proton acceptor is K189. Position 253 (R253) interacts with NADPH. 2 residues coordinate NADPH: V277 and E279.

It belongs to the NAD-dependent glycerol-3-phosphate dehydrogenase family.

The protein localises to the cytoplasm. The enzyme catalyses sn-glycerol 3-phosphate + NAD(+) = dihydroxyacetone phosphate + NADH + H(+). It carries out the reaction sn-glycerol 3-phosphate + NADP(+) = dihydroxyacetone phosphate + NADPH + H(+). It functions in the pathway membrane lipid metabolism; glycerophospholipid metabolism. Catalyzes the reduction of the glycolytic intermediate dihydroxyacetone phosphate (DHAP) to sn-glycerol 3-phosphate (G3P), the key precursor for phospholipid synthesis. The sequence is that of Glycerol-3-phosphate dehydrogenase [NAD(P)+] from Halothermothrix orenii (strain H 168 / OCM 544 / DSM 9562).